The primary structure comprises 409 residues: N-acetylglucosamine-6-phosphate deacetylase (409 aa).

An a divalent metal cation-binding site is contributed by glutamate 143. Residue alanine 154–histidine 155 participates in substrate binding. A divalent metal cation contacts are provided by histidine 211 and histidine 232. Substrate-binding positions include asparagine 235 to alanine 236, arginine 243, and aspartate 269 to histidine 272. Catalysis depends on aspartate 294, which acts as the Proton donor/acceptor. Leucine 328–glycine 330 is a binding site for substrate.

It belongs to the metallo-dependent hydrolases superfamily. NagA family. The cofactor is a divalent metal cation.

It carries out the reaction N-acetyl-D-glucosamine 6-phosphate + H2O = D-glucosamine 6-phosphate + acetate. Its pathway is amino-sugar metabolism; N-acetylneuraminate degradation. Hydrolyzes the N-glycolyl group from N-glycolylglucosamine 6-phosphate (GlcNGc-6-P) in the N-glycolylneuraminic acid (Neu5Gc) degradation pathway. This Mus musculus (Mouse) protein is N-acetylglucosamine-6-phosphate deacetylase (Amdhd2).